A 161-amino-acid polypeptide reads, in one-letter code: Phosphopantetheine adenylyltransferase (161 aa).

Threonine 10 contacts substrate. ATP-binding positions include 10–11 (TF) and histidine 18. Lysine 42, leucine 74, and arginine 88 together coordinate substrate. ATP is bound by residues 89 to 91 (GLR), glutamate 99, and 124 to 130 (NAFISSS).

The protein belongs to the bacterial CoaD family. Homohexamer. Mg(2+) serves as cofactor.

It is found in the cytoplasm. It catalyses the reaction (R)-4'-phosphopantetheine + ATP + H(+) = 3'-dephospho-CoA + diphosphate. It participates in cofactor biosynthesis; coenzyme A biosynthesis; CoA from (R)-pantothenate: step 4/5. Reversibly transfers an adenylyl group from ATP to 4'-phosphopantetheine, yielding dephospho-CoA (dPCoA) and pyrophosphate. This Wolinella succinogenes (strain ATCC 29543 / DSM 1740 / CCUG 13145 / JCM 31913 / LMG 7466 / NCTC 11488 / FDC 602W) (Vibrio succinogenes) protein is Phosphopantetheine adenylyltransferase.